We begin with the raw amino-acid sequence, 616 residues long: D-glutamate cyclase, mitochondrial (616 aa).

Residues 1-28 constitute a mitochondrion transit peptide; that stretch reads MPFTLHLRSRLPSAIRSLILQKKPNIRN.

It belongs to the D-glutamate cyclase family.

Its subcellular location is the mitochondrion matrix. The catalysed reaction is D-glutamate = 5-oxo-D-proline + H2O. Functionally, D-glutamate cyclase that converts D-glutamate to 5-oxo-D-proline. In Homo sapiens (Human), this protein is D-glutamate cyclase, mitochondrial.